The chain runs to 79 residues: Large ribosomal subunit protein uL24 (79 aa).

It belongs to the universal ribosomal protein uL24 family. In terms of assembly, part of the 50S ribosomal subunit.

In terms of biological role, one of two assembly initiator proteins, it binds directly to the 5'-end of the 23S rRNA, where it nucleates assembly of the 50S subunit. Functionally, one of the proteins that surrounds the polypeptide exit tunnel on the outside of the subunit. The protein is Large ribosomal subunit protein uL24 of Aliarcobacter butzleri (strain RM4018) (Arcobacter butzleri).